We begin with the raw amino-acid sequence, 377 residues long: MAANKGINGGIKNHFIAFLGEFVGTFLFLFFAYGGTQTANQTSQKNPSIVASPDINQLLYIALIFGFSLTVNVWIFFRVSGGLFNPAVTIALCLVGVVGPVRSIFIFIAQVVASIAAAAAVRGLLPGDTVLFSCALAPGTSIAQGLFLEMFFTIELVFTILMLAAEKTKVTFVAPVGIGLSLFVAELMGVAWTGGALNPARAFGAEVIGGFRGYHWIYWLGPLMGAVLAAGFYKVIKFLNYEQVNGEQDLSAEEKQLKDEKKARKKEERRRKQNFAGLFQTGRMHHHHHANTRNATVNDAGDGRPNSAPPYTEPPAQQQTWPHSASTIRENEDFSRFAEMGSQDGIVITREQPAEQYRLSGERYVQDANAQNRAKTP.

Topologically, residues 1–14 (MAANKGINGGIKNH) are cytoplasmic. The chain crosses the membrane as a helical span at residues 15–35 (FIAFLGEFVGTFLFLFFAYGG). Over 36-56 (TQTANQTSQKNPSIVASPDIN) the chain is Extracellular. Asn-40 carries an N-linked (GlcNAc...) asparagine glycan. A helical transmembrane segment spans residues 57–77 (QLLYIALIFGFSLTVNVWIFF). Topologically, residues 78 to 87 (RVSGGLFNPA) are cytoplasmic. An NPA 1 motif is present at residues 85–87 (NPA). Residues 88-108 (VTIALCLVGVVGPVRSIFIFI) form a helical membrane-spanning segment. The Extracellular segment spans residues 109–144 (AQVVASIAAAAAVRGLLPGDTVLFSCALAPGTSIAQ). A helical transmembrane segment spans residues 145–165 (GLFLEMFFTIELVFTILMLAA). At 166-171 (EKTKVT) the chain is on the cytoplasmic side. Residues 172 to 192 (FVAPVGIGLSLFVAELMGVAW) form a helical membrane-spanning segment. Over 193 to 215 (TGGALNPARAFGAEVIGGFRGYH) the chain is Extracellular. The NPA 2 signature appears at 198–200 (NPA). Residues 216 to 236 (WIYWLGPLMGAVLAAGFYKVI) form a helical membrane-spanning segment. Residues 237–377 (KFLNYEQVNG…ANAQNRAKTP (141 aa)) lie on the Cytoplasmic side of the membrane. Disordered regions lie at residues 278–332 (LFQT…RENE) and 358–377 (RLSG…AKTP). 2 stretches are compositionally biased toward polar residues: residues 315-328 (PAQQ…ASTI) and 368-377 (ANAQNRAKTP).

This sequence belongs to the MIP/aquaporin (TC 1.A.8) family.

The protein resides in the membrane. It carries out the reaction H2O(in) = H2O(out). It catalyses the reaction glycerol(in) = glycerol(out). Functionally, water channel required to facilitate the transport of water across membranes. Involved in conidiation. This chain is Aquaporin-2, found in Botryotinia fuckeliana (strain B05.10) (Noble rot fungus).